A 162-amino-acid polypeptide reads, in one-letter code: uncharacterized protein (162 aa).

It belongs to the A.longa ORF167/ORF288 family.

It is found in the plastid. This is an uncharacterized protein from Euglena longa (Euglenophycean alga).